A 184-amino-acid polypeptide reads, in one-letter code: Ribosome-recycling factor (184 aa).

The protein belongs to the RRF family.

It localises to the cytoplasm. In terms of biological role, responsible for the release of ribosomes from messenger RNA at the termination of protein biosynthesis. May increase the efficiency of translation by recycling ribosomes from one round of translation to another. The protein is Ribosome-recycling factor of Thermoanaerobacter pseudethanolicus (strain ATCC 33223 / 39E) (Clostridium thermohydrosulfuricum).